Consider the following 161-residue polypeptide: Chaperone protein dnaJ 11, chloroplastic (161 aa).

Low complexity predominate over residues Met1–Pro18. Residues Met1–Arg31 are disordered. The transit peptide at Met1–Leu36 directs the protein to the chloroplast. The J domain maps to Ser65–Met133.

It belongs to the DnaJ family. C/III subfamily. As to expression, expressed in roots, stems, leaves, flowers and developing siliques.

It localises to the plastid. The protein localises to the chloroplast stroma. In terms of biological role, plays a continuous role in plant development probably in the structural organization of compartments. The polypeptide is Chaperone protein dnaJ 11, chloroplastic (ATJ11) (Arabidopsis thaliana (Mouse-ear cress)).